The primary structure comprises 362 residues: Methionine import ATP-binding protein MetN (362 aa).

In terms of domain architecture, ABC transporter spans 2-241; sequence IHIENLSKTY…PRHEVTRAMV (240 aa). An ATP-binding site is contributed by 38–45; the sequence is GPSGAGKS.

This sequence belongs to the ABC transporter superfamily. Methionine importer (TC 3.A.1.24) family. The complex is composed of two ATP-binding proteins (MetN), two transmembrane proteins (MetI) and a solute-binding protein (MetQ).

The protein localises to the cell inner membrane. It carries out the reaction L-methionine(out) + ATP + H2O = L-methionine(in) + ADP + phosphate + H(+). The enzyme catalyses D-methionine(out) + ATP + H2O = D-methionine(in) + ADP + phosphate + H(+). In terms of biological role, part of the ABC transporter complex MetNIQ involved in methionine import. Responsible for energy coupling to the transport system. The sequence is that of Methionine import ATP-binding protein MetN from Bordetella bronchiseptica (strain ATCC BAA-588 / NCTC 13252 / RB50) (Alcaligenes bronchisepticus).